The following is a 156-amino-acid chain: MKLQLIAVGTKMPDWVTRGFEEYQRRFPRDMALELIEIPAGKRGKNADIARILHKEGELMLAAVAKGNHIVSLDLPGKNWTTPELAEQMTKWQLDGRDVSLLIGGPEGLSPACKEAANQSWCLSALTLPHPLVRVIVAESLYRAWSVNTNHPYHRE.

S-adenosyl-L-methionine contacts are provided by residues leucine 73, glycine 104, and 123–128 (LSALTL).

Belongs to the RNA methyltransferase RlmH family. As to quaternary structure, homodimer.

It localises to the cytoplasm. The enzyme catalyses pseudouridine(1915) in 23S rRNA + S-adenosyl-L-methionine = N(3)-methylpseudouridine(1915) in 23S rRNA + S-adenosyl-L-homocysteine + H(+). In terms of biological role, specifically methylates the pseudouridine at position 1915 (m3Psi1915) in 23S rRNA. In Shewanella frigidimarina (strain NCIMB 400), this protein is Ribosomal RNA large subunit methyltransferase H.